Reading from the N-terminus, the 149-residue chain is Transcriptional regulator MraZ (149 aa).

SpoVT-AbrB domains follow at residues 7 to 54 and 83 to 126; these read KYVN…GISH and AVQL…QPQN.

This sequence belongs to the MraZ family. As to quaternary structure, forms oligomers.

It is found in the cytoplasm. The protein localises to the nucleoid. The protein is Transcriptional regulator MraZ of Rickettsia peacockii (strain Rustic).